We begin with the raw amino-acid sequence, 323 residues long: Elongation factor P--(R)-beta-lysine ligase (323 aa).

Position 76–78 (76–78 (SPE)) interacts with substrate. ATP contacts are provided by residues 100–102 (RNE) and Asn109. Substrate is bound at residue Tyr118. 242 to 243 (EL) contacts ATP. Glu249 is a binding site for substrate. Gly298 is a binding site for ATP.

It belongs to the class-II aminoacyl-tRNA synthetase family. EpmA subfamily. Homodimer.

The catalysed reaction is D-beta-lysine + L-lysyl-[protein] + ATP = N(6)-((3R)-3,6-diaminohexanoyl)-L-lysyl-[protein] + AMP + diphosphate + H(+). With EpmB is involved in the beta-lysylation step of the post-translational modification of translation elongation factor P (EF-P). Catalyzes the ATP-dependent activation of (R)-beta-lysine produced by EpmB, forming a lysyl-adenylate, from which the beta-lysyl moiety is then transferred to the epsilon-amino group of a conserved specific lysine residue in EF-P. The protein is Elongation factor P--(R)-beta-lysine ligase of Haemophilus influenzae (strain PittGG).